A 213-amino-acid polypeptide reads, in one-letter code: Probable nicotinate-nucleotide adenylyltransferase (213 aa).

It belongs to the NadD family.

The enzyme catalyses nicotinate beta-D-ribonucleotide + ATP + H(+) = deamido-NAD(+) + diphosphate. It participates in cofactor biosynthesis; NAD(+) biosynthesis; deamido-NAD(+) from nicotinate D-ribonucleotide: step 1/1. In terms of biological role, catalyzes the reversible adenylation of nicotinate mononucleotide (NaMN) to nicotinic acid adenine dinucleotide (NaAD). This Salmonella gallinarum (strain 287/91 / NCTC 13346) protein is Probable nicotinate-nucleotide adenylyltransferase.